We begin with the raw amino-acid sequence, 442 residues long: Meiotically up-regulated gene 191 protein (442 aa).

Thr361 is modified (phosphothreonine). Over residues 416–429 (RNNPSSGESTTLPQ) the composition is skewed to polar residues. Residues 416 to 442 (RNNPSSGESTTLPQPSHGKKDKDCVIS) form a disordered region. Over residues 433 to 442 (GKKDKDCVIS) the composition is skewed to basic and acidic residues.

It localises to the cytoplasm. The protein localises to the nucleus. In terms of biological role, has a role in meiosis. This is Meiotically up-regulated gene 191 protein (mug191) from Schizosaccharomyces pombe (strain 972 / ATCC 24843) (Fission yeast).